A 351-amino-acid chain; its full sequence is Methylthioribose-1-phosphate isomerase (351 aa).

Residues arginine 51–alanine 53, arginine 94, and glutamine 199 each bind substrate. Residue aspartate 240 is the Proton donor of the active site. Asparagine 250 to lysine 251 lines the substrate pocket.

The protein belongs to the EIF-2B alpha/beta/delta subunits family. MtnA subfamily. As to quaternary structure, homodimer.

It carries out the reaction 5-(methylsulfanyl)-alpha-D-ribose 1-phosphate = 5-(methylsulfanyl)-D-ribulose 1-phosphate. The protein operates within amino-acid biosynthesis; L-methionine biosynthesis via salvage pathway; L-methionine from S-methyl-5-thio-alpha-D-ribose 1-phosphate: step 1/6. Functionally, catalyzes the interconversion of methylthioribose-1-phosphate (MTR-1-P) into methylthioribulose-1-phosphate (MTRu-1-P). This is Methylthioribose-1-phosphate isomerase from Bacillus thuringiensis subsp. konkukian (strain 97-27).